The sequence spans 627 residues: BEL1-like homeodomain protein 4 (627 aa).

The interval 206 to 225 (SSQHHHHQVVGHFGSSSSSP) is disordered. A compositionally biased stretch (low complexity) spans 215–225 (VGHFGSSSSSP). The SR/KY domain stretch occupies residues 241–257 (SKYTKPAQELLEEFCSV). Residues 263-307 (KKNKLSRNNSNPNTTGGGGGGGSSSSAGTANDSPPLSPADRIEHQ) form a disordered region. Residues 302–373 (DRIEHQRRKV…CLKDAVAVQL (72 aa)) form a BELL domain region. The segment at residues 424-486 (AWRPQRGLPE…NARVRLWKPM (63 aa)) is a DNA-binding region (homeobox). Positions 494–530 (EAKEREEAEEENENQQQQRRQQQTNNNDTKPNNNENN) are disordered. Low complexity predominate over residues 507 to 530 (NQQQQRRQQQTNNNDTKPNNNENN).

It belongs to the TALE/BELL homeobox family. In terms of assembly, may form heterodimeric complexes with TALE/KNOX proteins. Interacts with OFP1, OFP2 and OFP5. Interacts with KNATM, isoform KNATM-B. As to expression, expressed in lateral organs.

It localises to the nucleus. Its function is as follows. Transcription factor that establishes leaf shape by repressing growth in specific subdomains of the leaf. Negatively regulates knox homeobox gene KNAT1/BP expression. This Arabidopsis thaliana (Mouse-ear cress) protein is BEL1-like homeodomain protein 4 (BLH4).